Consider the following 119-residue polypeptide: Small ribosomal subunit protein bS6 (119 aa).

The segment at 99 to 119 (KKEKKQSRKEEGSENSEKVEE) is disordered.

The protein belongs to the bacterial ribosomal protein bS6 family.

Binds together with bS18 to 16S ribosomal RNA. The protein is Small ribosomal subunit protein bS6 of Thermosipho melanesiensis (strain DSM 12029 / CIP 104789 / BI429).